Here is a 276-residue protein sequence, read N- to C-terminus: Small ribosomal subunit protein uS2 (276 aa).

Ser-2 is modified (N-acetylserine).

Belongs to the universal ribosomal protein uS2 family. As to quaternary structure, component of the small ribosomal subunit. Mature ribosomes consist of a small (40S) and a large (60S) subunit. The 40S subunit contains about 33 different proteins and 1 molecule of RNA (18S). The 60S subunit contains about 49 different proteins and 3 molecules of RNA (28S, 5.8S and 5S). Interacts with rps-21.

It localises to the cytoplasm. Its function is as follows. Required for the assembly and/or stability of the 40S ribosomal subunit. Required for the processing of the 20S rRNA-precursor to mature 18S rRNA in a late step of the maturation of 40S ribosomal subunits. Involved in cold-warm shock-induced translocation of the RNA exosome components from the nucleolus to nucleoplasm. The polypeptide is Small ribosomal subunit protein uS2 (Caenorhabditis elegans).